The sequence spans 282 residues: Aquaporin NIP1-1 (282 aa).

2 helical membrane passes run 46–66 and 74–94; these read IIAE…AVTI and ITFP…VYAV. Positions 103–105 match the NPA 1 motif; it reads NPA. 3 consecutive transmembrane segments (helical) span residues 125 to 145, 162 to 182, and 186 to 206; these read VLAQ…MFGG, SLVI…GVAT, and AIGE…VLIA. An NPA 2 motif is present at residues 215-217; the sequence is NPA. A helical membrane pass occupies residues 232–252; that stretch reads IWVYVVGPVVGAVAGAWAYNL.

Belongs to the MIP/aquaporin (TC 1.A.8) family. NIP (TC 1.A.8.12) subfamily.

It localises to the membrane. Functionally, aquaporins facilitate the transport of water and small neutral solutes across cell membranes. This Zea mays (Maize) protein is Aquaporin NIP1-1 (NIP1-1).